The sequence spans 162 residues: Large ribosomal subunit protein uL10 (162 aa).

It belongs to the universal ribosomal protein uL10 family. As to quaternary structure, part of the ribosomal stalk of the 50S ribosomal subunit. The N-terminus interacts with L11 and the large rRNA to form the base of the stalk. The C-terminus forms an elongated spine to which L12 dimers bind in a sequential fashion forming a multimeric L10(L12)X complex.

Forms part of the ribosomal stalk, playing a central role in the interaction of the ribosome with GTP-bound translation factors. This Phytoplasma mali (strain AT) protein is Large ribosomal subunit protein uL10.